Consider the following 329-residue polypeptide: Holliday junction branch migration complex subunit RuvB (329 aa).

The tract at residues 1–180 is large ATPase domain (RuvB-L); that stretch reads MKNILQSTEC…FGIPIHLEFY (180 aa). ATP-binding positions include Ile19, Arg20, Gly61, Lys64, Thr65, Thr66, 127-129, Arg170, Tyr180, and Arg217; that span reads EDF. A Mg(2+)-binding site is contributed by Thr65. Residues 181–252 form a small ATPAse domain (RuvB-S) region; the sequence is STEELIKVIQ…FADKALLRLG (72 aa). The interval 255–329 is head domain (RuvB-H); it reads KLGLDRQDIQ…ISYLKEQSYI (75 aa). The DNA site is built by Arg308 and Arg313.

This sequence belongs to the RuvB family. As to quaternary structure, homohexamer. Forms an RuvA(8)-RuvB(12)-Holliday junction (HJ) complex. HJ DNA is sandwiched between 2 RuvA tetramers; dsDNA enters through RuvA and exits via RuvB. An RuvB hexamer assembles on each DNA strand where it exits the tetramer. Each RuvB hexamer is contacted by two RuvA subunits (via domain III) on 2 adjacent RuvB subunits; this complex drives branch migration. In the full resolvosome a probable DNA-RuvA(4)-RuvB(12)-RuvC(2) complex forms which resolves the HJ.

It localises to the cytoplasm. The enzyme catalyses ATP + H2O = ADP + phosphate + H(+). Functionally, the RuvA-RuvB-RuvC complex processes Holliday junction (HJ) DNA during genetic recombination and DNA repair, while the RuvA-RuvB complex plays an important role in the rescue of blocked DNA replication forks via replication fork reversal (RFR). RuvA specifically binds to HJ cruciform DNA, conferring on it an open structure. The RuvB hexamer acts as an ATP-dependent pump, pulling dsDNA into and through the RuvAB complex. RuvB forms 2 homohexamers on either side of HJ DNA bound by 1 or 2 RuvA tetramers; 4 subunits per hexamer contact DNA at a time. Coordinated motions by a converter formed by DNA-disengaged RuvB subunits stimulates ATP hydrolysis and nucleotide exchange. Immobilization of the converter enables RuvB to convert the ATP-contained energy into a lever motion, pulling 2 nucleotides of DNA out of the RuvA tetramer per ATP hydrolyzed, thus driving DNA branch migration. The RuvB motors rotate together with the DNA substrate, which together with the progressing nucleotide cycle form the mechanistic basis for DNA recombination by continuous HJ branch migration. Branch migration allows RuvC to scan DNA until it finds its consensus sequence, where it cleaves and resolves cruciform DNA. This is Holliday junction branch migration complex subunit RuvB from Ehrlichia canis (strain Jake).